A 1271-amino-acid polypeptide reads, in one-letter code: Protein flightless-1 homolog (1271 aa).

At Met-1 the chain carries N-acetylmethionine. Residues 1–427 (MEATGVLPFV…SGSKDPLARK (427 aa)) form an interaction with LRRFIP1 and LRRFIP2 region. LRR repeat units follow at residues 7–32 (LPFV…VKAM), 33–55 (TSLR…LAAL), 56–78 (QKLE…LSSL), 80–103 (SLRA…IFKL), 104–126 (DDLS…LENA), 127–149 (KNML…LFIN), 150–173 (LTDL…MRRL), 175–196 (HLQT…QLPA), 197–222 (MMAL…LEGL), 223–245 (SNLS…LYTL), 247–268 (SLRR…IDQW), 269–291 (VHLE…ICKL), 293–316 (KLKK…IGKL), 317–339 (TSLE…LCRC), 340–363 (PKLK…HFLT), and 365–385 (IQVL…PADR). N6-acetyllysine is present on Lys-21. Ser-406 carries the post-translational modification Phosphoserine. A Phosphoserine; by SGK3 modification is found at Ser-436. An interaction with ACTL6A region spans residues 495–827 (VGQLPGLTIW…VVSRSLEGTE (333 aa)). 3 Gelsolin-like repeats span residues 509 to 591 (FVPV…EEFL), 629 to 703 (NIKL…PGFW), and 759 to 831 (LMPG…AQVF). The residue at position 860 (Ser-860) is a Phosphoserine. Residues 951 to 977 (KTEDKEGKASAEAREGEEAAAEAEEKQ) form a disordered region. The span at 952-967 (TEDKEGKASAEAREGE) shows a compositional bias: basic and acidic residues. Residues 968–977 (EAAAEAEEKQ) are compositionally biased toward acidic residues. A Gelsolin-like 4 repeat occupies 1183–1256 (KCSDFCQDDL…VRKGNEQRAF (74 aa)).

In terms of assembly, interacts with actin, ACTL6A and NCOA2. Interacts with CARM1. Interacts with LRRFIP1, LRRFIP2 and MYD88. Upon LPS stimulation, LRRFIP2 competes for MYD88-binding; LRRFIP1 constitutively blocks the interaction with MyD88, even in the absence of LPS. Interacts with the nuclear receptors ESR1 and THRB. Interacts with SGK3. Interacts (via the gelsolin-like region) with TMOD1 and TMOD3. Interacts with LMOD2, VCL, GSN and DES. As to expression, expressed in blastocyst.

The protein localises to the nucleus. It is found in the cytoplasm. Its subcellular location is the cytoskeleton. It localises to the microtubule organizing center. The protein resides in the centrosome. The protein localises to the cell junction. It is found in the focal adhesion. Its subcellular location is the cell projection. It localises to the podosome. Functionally, is a regulator of actin polymerization, required for proper myofibril organization and regulation of the length of sarcomeric thin filaments. It also plays a role in the assembly of cardiomyocyte cell adhesion complexes. Regulates cytoskeletal rearrangements involved in cytokinesis and cell migration, by inhibiting Rac1-dependent paxillin phosphorylation. May play a role as coactivator in transcriptional activation by hormone-activated nuclear receptors (NR) and acts in cooperation with NCOA2 and CARM1. Involved in estrogen hormone signaling. The chain is Protein flightless-1 homolog (Flii) from Mus musculus (Mouse).